The primary structure comprises 273 residues: Sanguinarine reductase (273 aa).

Ser-153 serves as the catalytic Proton donor. Residues 157 to 161 (CDPDH) and Lys-175 each bind substrate.

The protein belongs to the NAD(P)-dependent epimerase/dehydratase family. In terms of assembly, monomer.

It catalyses the reaction dihydrosanguinarine + NADP(+) = sanguinarine + NADPH. The catalysed reaction is dihydrosanguinarine + NAD(+) = sanguinarine + NADH. The enzyme catalyses dihydrochelirubine + NAD(+) = chelirubine + NADH. It carries out the reaction dihydrochelirubine + NADP(+) = chelirubine + NADPH. Its activity is regulated as follows. Inhibited by iodoacetamide and irreversibly by its product, dihydrosanguinarine. Catalyzes the reduction of benzophenanthridines, preferentially sanguinarine, to the corresponding dihydroalkaloids. Involved in detoxifying the phytoalexins produced by plant itself. The sanguinarine produced by intact cells upon elicitation, after excretion and binding to cell wall elements, is rapidly reabsorbed and reduced to the less toxic dihydrosanguinarine. Can work with both NAD(P) or NAD as a hydrogen donor, but at low concentrations, the reaction velocity with NAD(P)H is threefold higher than with NADH. However, chelerythrine shows maximum conversion rates with NADH. The substrate preference is sanguinarine &gt; chelerythrine &gt; chelirubine, macarpine or 10-OH-chelerythrine. No activity with berberine or phenanthridine cations. The protein is Sanguinarine reductase of Eschscholzia californica (California poppy).